The sequence spans 390 residues: Nicotinate phosphoribosyltransferase (390 aa).

Residue histidine 211 is modified to Phosphohistidine; by autocatalysis.

It belongs to the NAPRTase family. Post-translationally, transiently phosphorylated on a His residue during the reaction cycle. Phosphorylation strongly increases the affinity for substrates and increases the rate of nicotinate D-ribonucleotide production. Dephosphorylation regenerates the low-affinity form of the enzyme, leading to product release.

The enzyme catalyses nicotinate + 5-phospho-alpha-D-ribose 1-diphosphate + ATP + H2O = nicotinate beta-D-ribonucleotide + ADP + phosphate + diphosphate. It functions in the pathway cofactor biosynthesis; NAD(+) biosynthesis; nicotinate D-ribonucleotide from nicotinate: step 1/1. Its function is as follows. Catalyzes the synthesis of beta-nicotinate D-ribonucleotide from nicotinate and 5-phospho-D-ribose 1-phosphate at the expense of ATP. The sequence is that of Nicotinate phosphoribosyltransferase from Chromohalobacter salexigens (strain ATCC BAA-138 / DSM 3043 / CIP 106854 / NCIMB 13768 / 1H11).